The primary structure comprises 243 residues: UPF0758 protein Tery_2667 (243 aa).

The region spanning 113 to 235 (VVESPQAAAD…HSSLRQITNL (123 aa)) is the MPN domain. 3 residues coordinate Zn(2+): histidine 184, histidine 186, and aspartate 197. The JAMM motif motif lies at 184–197 (HNHPSGNVEPSPED).

This sequence belongs to the UPF0758 family.

The protein is UPF0758 protein Tery_2667 of Trichodesmium erythraeum (strain IMS101).